A 152-amino-acid polypeptide reads, in one-letter code: Transcriptional repressor NrdR (152 aa).

A zinc finger spans residues 3–34 (CPKCTSIEDKVIDSRISKEGSTIRRRRECLEC). An ATP-cone domain is found at 49–139 (IVVIKRDGRR…VYKEFRDVSE (91 aa)).

The protein belongs to the NrdR family. Zn(2+) serves as cofactor.

Its function is as follows. Negatively regulates transcription of bacterial ribonucleotide reductase nrd genes and operons by binding to NrdR-boxes. The chain is Transcriptional repressor NrdR from Opitutus terrae (strain DSM 11246 / JCM 15787 / PB90-1).